We begin with the raw amino-acid sequence, 166 residues long: NADH-quinone oxidoreductase subunit I (166 aa).

4Fe-4S ferredoxin-type domains are found at residues 57–87 (LRRY…IESE) and 97–126 (TRYD…VTPI). Positions 67, 70, 73, 77, 106, 109, 112, and 116 each coordinate [4Fe-4S] cluster.

It belongs to the complex I 23 kDa subunit family. In terms of assembly, NDH-1 is composed of 14 different subunits. Subunits NuoA, H, J, K, L, M, N constitute the membrane sector of the complex. [4Fe-4S] cluster is required as a cofactor.

Its subcellular location is the cell inner membrane. It carries out the reaction a quinone + NADH + 5 H(+)(in) = a quinol + NAD(+) + 4 H(+)(out). In terms of biological role, NDH-1 shuttles electrons from NADH, via FMN and iron-sulfur (Fe-S) centers, to quinones in the respiratory chain. The immediate electron acceptor for the enzyme in this species is believed to be ubiquinone. Couples the redox reaction to proton translocation (for every two electrons transferred, four hydrogen ions are translocated across the cytoplasmic membrane), and thus conserves the redox energy in a proton gradient. In Legionella pneumophila (strain Paris), this protein is NADH-quinone oxidoreductase subunit I.